The sequence spans 393 residues: Acetylornithine aminotransferase (393 aa).

Residues Gly95–Ala96 and Phe127 each bind pyridoxal 5'-phosphate. Arg130 contacts N(2)-acetyl-L-ornithine. Pyridoxal 5'-phosphate is bound at residue Asp214 to Gln217. N6-(pyridoxal phosphate)lysine is present on Lys243. Ser271 is a binding site for N(2)-acetyl-L-ornithine. Residue Thr272 coordinates pyridoxal 5'-phosphate.

Belongs to the class-III pyridoxal-phosphate-dependent aminotransferase family. ArgD subfamily. In terms of assembly, homodimer. Requires pyridoxal 5'-phosphate as cofactor.

The protein resides in the cytoplasm. The catalysed reaction is N(2)-acetyl-L-ornithine + 2-oxoglutarate = N-acetyl-L-glutamate 5-semialdehyde + L-glutamate. It participates in amino-acid biosynthesis; L-arginine biosynthesis; N(2)-acetyl-L-ornithine from L-glutamate: step 4/4. The sequence is that of Acetylornithine aminotransferase from Nitrosomonas europaea (strain ATCC 19718 / CIP 103999 / KCTC 2705 / NBRC 14298).